A 426-amino-acid chain; its full sequence is MLKAVILIGGPQKGTRFRPLSFEVPKPLFPVAGVPMVQHHIEACSKVPNLKEILLIGFYQPNEALSSFLLKAQQEFKVAIRYLQEYSALGTGGGIYHFRDQILSGGPQAFFVMNADVCSEFPLVPMLDFHKQHGGSQSYVILGTTANRTQSLNYGCIVSNGDTQEVLHYVEKPGTFVSDIINCGIYLFSPSIFQHIAEVFQRNQLELQLFSCISEENSSWQRTEVIRLEQDVFTTLAGHGKLYVYKTEGCWSQIKSAGSAIYASRLYLSQYSTTHPERLASTKEGGPTIRGNVYIHPTANVDPSAVLGPNVSVGMGVTVGAGVRIRESIILHGAVLQDHSCVLNTIVGWDSMVGRWARVEGTPSDPNPNDPYSKIDSETLFREGKLTPSITILGCNVSIPAEVVILNSIVLPHKELSRSFKNQIIL.

Belongs to the transferase hexapeptide repeat family.

The catalysed reaction is alpha-D-mannose 1-phosphate + GTP + H(+) = GDP-alpha-D-mannose + diphosphate. Its pathway is nucleotide-sugar biosynthesis; GDP-alpha-D-mannose biosynthesis; GDP-alpha-D-mannose from alpha-D-mannose 1-phosphate (GTP route): step 1/1. The sequence is that of Mannose-1-phosphate guanyltransferase alpha-B (gmppa-b) from Xenopus laevis (African clawed frog).